The chain runs to 124 residues: UPF0231 protein Shewana3_0655 (124 aa).

It belongs to the UPF0231 family.

This chain is UPF0231 protein Shewana3_0655, found in Shewanella sp. (strain ANA-3).